The chain runs to 81 residues: Small ribosomal subunit protein bS20 (81 aa).

It belongs to the bacterial ribosomal protein bS20 family.

In terms of biological role, binds directly to 16S ribosomal RNA. This is Small ribosomal subunit protein bS20 from Mycoplasma mycoides subsp. mycoides SC (strain CCUG 32753 / NCTC 10114 / PG1).